The following is a 485-amino-acid chain: MAKAIRVRYAPSPTGLLHIGNARTALFNYLYARHHGGTFIIRIEDTDRKRHVEDGERSQLENLRWLGMDWDESPETHENYRQSERLELYQKYIDQLLAEGKAYKSYVTEEELAAERERQEAAGETPRYINEYLGMSEEEKAAYIAEREAAGIIPTVRLSVNESGIYKWHDIVKGDIEFEGGNIGGDWVIQKKDGYPTYNFAVVIDDHDMQISHVIRGDDHIANTPKQLMVYEALGWEAPEFGHMTLIINSETGKKLSKRDTNTLQFIEDYRKKGYLPEAVFNFIALLGWNPGGEDEIFSREELIKLFDENRLSKSPAAFDQKKLDWMSNEYIKNADFERIFALAKPYLEEAGRLTDKAEKLVELYKPQMKSVDEIVPLTDLFFSDFPELTEAEREVMAGETVPVVLEAFKAKLEAMTDEEFVTENIFPQIKAVQKETGIKGKNLFMPIRIAVSGEMHGPELPDTIYLLGREKSIQHIENMLNQIQ.

Residues 11 to 21 (PSPTGLLHIGN) carry the 'HIGH' region motif. A 'KMSKS' region motif is present at residues 255–259 (KLSKR). K258 provides a ligand contact to ATP.

Belongs to the class-I aminoacyl-tRNA synthetase family. Glutamate--tRNA ligase type 1 subfamily. As to quaternary structure, monomer.

It localises to the cytoplasm. The enzyme catalyses tRNA(Glu) + L-glutamate + ATP = L-glutamyl-tRNA(Glu) + AMP + diphosphate. In terms of biological role, catalyzes the attachment of glutamate to tRNA(Glu) in a two-step reaction: glutamate is first activated by ATP to form Glu-AMP and then transferred to the acceptor end of tRNA(Glu). The protein is Glutamate--tRNA ligase of Streptococcus gordonii (strain Challis / ATCC 35105 / BCRC 15272 / CH1 / DL1 / V288).